The chain runs to 423 residues: Serine--tRNA ligase (423 aa).

An L-serine-binding site is contributed by 231 to 233 (TAE). 262 to 264 (RSE) is an ATP binding site. Glutamate 285 provides a ligand contact to L-serine. 349–352 (EIGS) is a binding site for ATP. Serine 385 is a binding site for L-serine.

It belongs to the class-II aminoacyl-tRNA synthetase family. Type-1 seryl-tRNA synthetase subfamily. Homodimer. The tRNA molecule binds across the dimer.

The protein localises to the cytoplasm. It catalyses the reaction tRNA(Ser) + L-serine + ATP = L-seryl-tRNA(Ser) + AMP + diphosphate + H(+). The enzyme catalyses tRNA(Sec) + L-serine + ATP = L-seryl-tRNA(Sec) + AMP + diphosphate + H(+). It participates in aminoacyl-tRNA biosynthesis; selenocysteinyl-tRNA(Sec) biosynthesis; L-seryl-tRNA(Sec) from L-serine and tRNA(Sec): step 1/1. In terms of biological role, catalyzes the attachment of serine to tRNA(Ser). Is also able to aminoacylate tRNA(Sec) with serine, to form the misacylated tRNA L-seryl-tRNA(Sec), which will be further converted into selenocysteinyl-tRNA(Sec). The polypeptide is Serine--tRNA ligase (Acholeplasma laidlawii (strain PG-8A)).